The chain runs to 193 residues: ATP-dependent protease subunit HslV (193 aa).

Residue Thr12 is part of the active site. Na(+) contacts are provided by Ala167, Cys170, and Thr173.

Belongs to the peptidase T1B family. HslV subfamily. As to quaternary structure, a double ring-shaped homohexamer of HslV is capped on each side by a ring-shaped HslU homohexamer. The assembly of the HslU/HslV complex is dependent on binding of ATP.

The protein resides in the cytoplasm. It catalyses the reaction ATP-dependent cleavage of peptide bonds with broad specificity.. With respect to regulation, allosterically activated by HslU binding. Its function is as follows. Protease subunit of a proteasome-like degradation complex believed to be a general protein degrading machinery. The chain is ATP-dependent protease subunit HslV from Bartonella quintana (strain Toulouse) (Rochalimaea quintana).